A 203-amino-acid polypeptide reads, in one-letter code: Small ribosomal subunit protein uS7 (203 aa).

The interval 1–21 (MSSEAPEPDAPASTDDERVSA) is disordered.

This sequence belongs to the universal ribosomal protein uS7 family. As to quaternary structure, part of the 30S ribosomal subunit.

Its function is as follows. One of the primary rRNA binding proteins, it binds directly to 16S rRNA where it nucleates assembly of the head domain of the 30S subunit. Is located at the subunit interface close to the decoding center. The polypeptide is Small ribosomal subunit protein uS7 (Natronomonas pharaonis (strain ATCC 35678 / DSM 2160 / CIP 103997 / JCM 8858 / NBRC 14720 / NCIMB 2260 / Gabara) (Halobacterium pharaonis)).